A 365-amino-acid chain; its full sequence is tRNA/tmRNA (uracil-C(5))-methyltransferase (365 aa).

Gln-189, Tyr-217, Asn-222, Glu-238, and Asp-298 together coordinate S-adenosyl-L-methionine. Cys-323 (nucleophile) is an active-site residue. The active-site Proton acceptor is Glu-357.

Belongs to the class I-like SAM-binding methyltransferase superfamily. RNA M5U methyltransferase family. TrmA subfamily.

The enzyme catalyses uridine(54) in tRNA + S-adenosyl-L-methionine = 5-methyluridine(54) in tRNA + S-adenosyl-L-homocysteine + H(+). It carries out the reaction uridine(341) in tmRNA + S-adenosyl-L-methionine = 5-methyluridine(341) in tmRNA + S-adenosyl-L-homocysteine + H(+). Its function is as follows. Dual-specificity methyltransferase that catalyzes the formation of 5-methyluridine at position 54 (m5U54) in all tRNAs, and that of position 341 (m5U341) in tmRNA (transfer-mRNA). The sequence is that of tRNA/tmRNA (uracil-C(5))-methyltransferase from Psychromonas ingrahamii (strain DSM 17664 / CCUG 51855 / 37).